We begin with the raw amino-acid sequence, 462 residues long: A-type ATP synthase subunit B (462 aa).

The protein belongs to the ATPase alpha/beta chains family. Has multiple subunits with at least A(3), B(3), C, D, E, F, H, I and proteolipid K(x).

Its subcellular location is the cell membrane. Functionally, component of the A-type ATP synthase that produces ATP from ADP in the presence of a proton gradient across the membrane. The B chain is a regulatory subunit. The sequence is that of A-type ATP synthase subunit B from Pyrococcus abyssi (strain GE5 / Orsay).